The primary structure comprises 826 residues: E3 ubiquitin-protein ligase SH3RF1 (826 aa).

The RING-type zinc-finger motif lies at 12 to 53 (CPVCLERLDASAKVLPCQHTFCKRCLLGIVSSRKELRCPECR). The disordered stretch occupies residues 80 to 130 (PRKAGDGGSAGNSTNALRAQGSVTTNGGLNDAQNTQSGQQRIQARSPPVRG). Residues 90–122 (GNSTNALRAQGSVTTNGGLNDAQNTQSGQQRIQ) are compositionally biased toward polar residues. SH3 domains are found at residues 132-191 (PQLP…IIKP) and 194-257 (QPPP…FNSA). A disordered region spans residues 266 to 319 (KPSGADTGEGSSGTSHSGNSQKQADAKKNTKKRHSFTSLTMSNKSSQSVQNRHS). Residues 273–285 (GEGSSGTSHSGNS) show a composition bias toward low complexity. The span at 301-317 (FTSLTMSNKSSQSVQNR) shows a compositional bias: polar residues. The 62-residue stretch at 398–459 (ARPSVFIAIY…PGNYVAPVTR (62 aa)) folds into the SH3 3 domain. 2 disordered regions span residues 647–694 (NSAA…QTNS) and 725–759 (DSVS…CSSL). The segment covering 652–663 (KQDKDSKKEKKG) has biased composition (basic and acidic residues). Residues 767–826 (RPCERYRVMVSYPPQSEAELELKEGDIVFVHKKREDGWFKGTLQRNGKTGLFPGSFVENI) form the SH3 4 domain.

The protein belongs to the SH3RF family. Post-translationally, autoubiquitinated. Ubiquitinated by SH3RF2, leading to proteasome-mediated degradation.

It localises to the cytoplasm. It is found in the perinuclear region. Its subcellular location is the cell projection. The protein localises to the lamellipodium. The protein resides in the golgi apparatus. It localises to the trans-Golgi network. It catalyses the reaction S-ubiquitinyl-[E2 ubiquitin-conjugating enzyme]-L-cysteine + [acceptor protein]-L-lysine = [E2 ubiquitin-conjugating enzyme]-L-cysteine + N(6)-ubiquitinyl-[acceptor protein]-L-lysine.. It functions in the pathway protein modification; protein ubiquitination. Functionally, has E3 ubiquitin-protein ligase activity. In the absence of an external substrate, it can catalyze self-ubiquitination. Acts as a scaffold protein that contributes to the effective activation of the JNK signaling pathway. Plays an essential role in the anterior neural development. The polypeptide is E3 ubiquitin-protein ligase SH3RF1 (sh3rf1) (Xenopus laevis (African clawed frog)).